Here is a 472-residue protein sequence, read N- to C-terminus: 6-phosphogluconate dehydrogenase, decarboxylating (472 aa).

Residues glycine 10–glycine 15, asparagine 33–threonine 35, valine 74–alanine 76, and asparagine 102 contribute to the NADP(+) site. Substrate contacts are provided by residues asparagine 102 and serine 128–glycine 130. Lysine 184 acts as the Proton acceptor in catalysis. Histidine 187–asparagine 188 serves as a coordination point for substrate. Glutamate 191 serves as the catalytic Proton donor. Residues tyrosine 192, lysine 262, arginine 289, arginine 447, and histidine 453 each contribute to the substrate site.

It belongs to the 6-phosphogluconate dehydrogenase family. Homodimer.

The enzyme catalyses 6-phospho-D-gluconate + NADP(+) = D-ribulose 5-phosphate + CO2 + NADPH. Its pathway is carbohydrate degradation; pentose phosphate pathway; D-ribulose 5-phosphate from D-glucose 6-phosphate (oxidative stage): step 3/3. Functionally, catalyzes the oxidative decarboxylation of 6-phosphogluconate to ribulose 5-phosphate and CO(2), with concomitant reduction of NADP to NADPH. This chain is 6-phosphogluconate dehydrogenase, decarboxylating (gnd), found in Lactococcus lactis subsp. cremoris (strain MG1363).